The following is a 493-amino-acid chain: ATP synthase subunit beta (493 aa).

169 to 176 serves as a coordination point for ATP; the sequence is GGAGVGKT.

It belongs to the ATPase alpha/beta chains family. F-type ATPases have 2 components, CF(1) - the catalytic core - and CF(0) - the membrane proton channel. CF(1) has five subunits: alpha(3), beta(3), gamma(1), delta(1), epsilon(1). CF(0) has three main subunits: a(1), b(2) and c(9-12). The alpha and beta chains form an alternating ring which encloses part of the gamma chain. CF(1) is attached to CF(0) by a central stalk formed by the gamma and epsilon chains, while a peripheral stalk is formed by the delta and b chains.

Its subcellular location is the cell inner membrane. The enzyme catalyses ATP + H2O + 4 H(+)(in) = ADP + phosphate + 5 H(+)(out). In terms of biological role, produces ATP from ADP in the presence of a proton gradient across the membrane. The catalytic sites are hosted primarily by the beta subunits. The chain is ATP synthase subunit beta from Gluconacetobacter diazotrophicus (strain ATCC 49037 / DSM 5601 / CCUG 37298 / CIP 103539 / LMG 7603 / PAl5).